Consider the following 470-residue polypeptide: Light-independent protochlorophyllide reductase subunit N (470 aa).

Residues C24, C49, and C109 each coordinate [4Fe-4S] cluster.

Belongs to the BchN/ChlN family. As to quaternary structure, protochlorophyllide reductase is composed of three subunits; ChlL, ChlN and ChlB. Forms a heterotetramer of two ChlB and two ChlN subunits. The cofactor is [4Fe-4S] cluster.

The enzyme catalyses chlorophyllide a + oxidized 2[4Fe-4S]-[ferredoxin] + 2 ADP + 2 phosphate = protochlorophyllide a + reduced 2[4Fe-4S]-[ferredoxin] + 2 ATP + 2 H2O. It functions in the pathway porphyrin-containing compound metabolism; chlorophyll biosynthesis (light-independent). Component of the dark-operative protochlorophyllide reductase (DPOR) that uses Mg-ATP and reduced ferredoxin to reduce ring D of protochlorophyllide (Pchlide) to form chlorophyllide a (Chlide). This reaction is light-independent. The NB-protein (ChlN-ChlB) is the catalytic component of the complex. This is Light-independent protochlorophyllide reductase subunit N from Acaryochloris marina (strain MBIC 11017).